We begin with the raw amino-acid sequence, 443 residues long: 23S rRNA (uracil(1939)-C(5))-methyltransferase RlmD (443 aa).

The region spanning lysine 8–glutamate 66 is the TRAM domain. The [4Fe-4S] cluster site is built by cysteine 79, cysteine 85, cysteine 88, and cysteine 167. S-adenosyl-L-methionine contacts are provided by glutamine 276, phenylalanine 305, asparagine 310, glutamate 326, aspartate 353, and aspartate 374. Cysteine 400 serves as the catalytic Nucleophile.

It belongs to the class I-like SAM-binding methyltransferase superfamily. RNA M5U methyltransferase family. RlmD subfamily.

It carries out the reaction uridine(1939) in 23S rRNA + S-adenosyl-L-methionine = 5-methyluridine(1939) in 23S rRNA + S-adenosyl-L-homocysteine + H(+). Catalyzes the formation of 5-methyl-uridine at position 1939 (m5U1939) in 23S rRNA. The protein is 23S rRNA (uracil(1939)-C(5))-methyltransferase RlmD of Methylococcus capsulatus (strain ATCC 33009 / NCIMB 11132 / Bath).